The primary structure comprises 1494 residues: Ral GTPase-activating protein subunit beta (1494 aa).

Disordered stretches follow at residues 355-437 (PRSD…APRR) and 709-738 (ENNL…PDSE). At Ser359 the chain carries Phosphoserine. Phosphothreonine occurs at positions 363 and 379. Composition is skewed to polar residues over residues 369–381 (SMPQ…TTPP), 392–428 (NKAT…TSSE), and 711–735 (NLKS…PTTP). A phosphoserine mark is found at Ser421 and Ser720. Thr734 is modified (phosphothreonine). One can recognise a Rap-GAP domain in the interval 1149–1392 (IGYLDLLPCR…TTLEKEVPVI (244 aa)). Ser1285 carries the post-translational modification Phosphoserine. The span at 1312–1323 (NLNSSQRLSPSS) shows a compositional bias: polar residues. Positions 1312–1335 (NLNSSQRLSPSSRMRKLPQGRPVP) are disordered.

Component of the heterodimeric RalGAP1 complex with RALGAPA1 and of the heterodimeric RalGAP2 complex with RALGAPA2. Heterodimerization is required for activity. In terms of tissue distribution, highly expressed in brain, mostly in amygdala.

Its function is as follows. Non-catalytic subunit of the heterodimeric RalGAP1 and RalGAP2 complexes which act as GTPase activators for the Ras-like small GTPases RALA and RALB. In Homo sapiens (Human), this protein is Ral GTPase-activating protein subunit beta (RALGAPB).